The sequence spans 199 residues: COMM domain-containing protein 2 (199 aa).

In terms of domain architecture, COMM spans 123-190; sequence SYHSLEWRLD…QALEEMKTNH (68 aa).

The protein belongs to the COMM domain-containing protein 2 family. Component of the commander complex consisting of the CCC subcomplex and the retriever subcomplex. Component of the CCC (COMMD/CCDC22/CCDC93) subcomplex consisting of COMMD1, COMMD2, COMMD3, COMMD4, COMMD5, COMMD6, COMMD7, COMMD8, COMMD9, COMMD10, CCDC22 and CCDC93; within the complex forms a heterodimer with COMMD3. Interacts with RELA, RELB, NFKB1/p105, NFKB2/p100. Interacts with CCDC22, CCDC93, SCNN1B, CUL3, CUL4B, CUL5, CUL7.

Its subcellular location is the cytoplasm. Scaffold protein in the commander complex that is essential for endosomal recycling of transmembrane cargos; the commander complex is composed of the CCC subcomplex and the retriever subcomplex. May modulate activity of cullin-RING E3 ubiquitin ligase (CRL) complexes. May down-regulate activation of NF-kappa-B. The chain is COMM domain-containing protein 2 (Commd2) from Mus musculus (Mouse).